Consider the following 187-residue polypeptide: Ribosome-recycling factor (187 aa).

This sequence belongs to the RRF family.

The protein resides in the cytoplasm. Functionally, responsible for the release of ribosomes from messenger RNA at the termination of protein biosynthesis. May increase the efficiency of translation by recycling ribosomes from one round of translation to another. This is Ribosome-recycling factor from Petrotoga mobilis (strain DSM 10674 / SJ95).